The following is a 173-amino-acid chain: Crossover junction endodeoxyribonuclease RuvC (173 aa).

Residues Asp-8, Glu-67, and Asp-139 contribute to the active site. Mg(2+) is bound by residues Asp-8, Glu-67, and Asp-139.

It belongs to the RuvC family. As to quaternary structure, homodimer which binds Holliday junction (HJ) DNA. The HJ becomes 2-fold symmetrical on binding to RuvC with unstacked arms; it has a different conformation from HJ DNA in complex with RuvA. In the full resolvosome a probable DNA-RuvA(4)-RuvB(12)-RuvC(2) complex forms which resolves the HJ. Mg(2+) serves as cofactor.

The protein localises to the cytoplasm. The enzyme catalyses Endonucleolytic cleavage at a junction such as a reciprocal single-stranded crossover between two homologous DNA duplexes (Holliday junction).. In terms of biological role, the RuvA-RuvB-RuvC complex processes Holliday junction (HJ) DNA during genetic recombination and DNA repair. Endonuclease that resolves HJ intermediates. Cleaves cruciform DNA by making single-stranded nicks across the HJ at symmetrical positions within the homologous arms, yielding a 5'-phosphate and a 3'-hydroxyl group; requires a central core of homology in the junction. The consensus cleavage sequence is 5'-(A/T)TT(C/G)-3'. Cleavage occurs on the 3'-side of the TT dinucleotide at the point of strand exchange. HJ branch migration catalyzed by RuvA-RuvB allows RuvC to scan DNA until it finds its consensus sequence, where it cleaves and resolves the cruciform DNA. The polypeptide is Crossover junction endodeoxyribonuclease RuvC (Shewanella piezotolerans (strain WP3 / JCM 13877)).